Reading from the N-terminus, the 357-residue chain is Solute carrier family 25 member 3 (357 aa).

The N-terminal 45 residues, methionine 1–alanine 45, are a transit peptide targeting the mitochondrion. Topologically, residues alanine 46 to lysine 58 are mitochondrial intermembrane. Solcar repeat units lie at residues lysine 58 to leucine 142, tryptophan 155 to alanine 239, and glutamate 256 to tyrosine 334. Residues tyrosine 59–leucine 81 traverse the membrane as a helical segment. Residues aspartate 82 to lysine 116 lie on the Mitochondrial matrix side of the membrane. Residue lysine 94 is modified to N6-acetyllysine. The residue at position 107 (lysine 107) is an N6-methyllysine. Residues glycine 117–tyrosine 136 form a helical membrane-spanning segment. Residues glutamate 137–arginine 156 lie on the Mitochondrial intermembrane side of the membrane. A helical transmembrane segment spans residues threonine 157–methionine 178. Residues glutamate 179–lysine 213 lie on the Mitochondrial matrix side of the membrane. Tyrosine 191 carries the phosphotyrosine modification. Position 204 is an N6-acetyllysine (lysine 204). The chain crosses the membrane as a helical span at residues glycine 214 to phenylalanine 233. Over glutamate 234–glutamate 256 the chain is Mitochondrial intermembrane. Residues glutamine 257–alanine 279 traverse the membrane as a helical segment. The Mitochondrial matrix segment spans residues aspartate 280–glycine 309. The helical transmembrane segment at leucine 310–tyrosine 328 threads the bilayer. At aspartate 329 to glutamate 357 the chain is on the mitochondrial intermembrane side.

This sequence belongs to the mitochondrial carrier (TC 2.A.29) family. As to quaternary structure, interacts with PPIF; the interaction is impaired by CsA.

Its subcellular location is the mitochondrion inner membrane. It carries out the reaction phosphate(in) + H(+)(in) = phosphate(out) + H(+)(out). Its function is as follows. Inorganic ion transporter that transports phosphate or copper ions across the mitochondrial inner membrane into the matrix compartment. Mediates proton-coupled symport of phosphate ions necessary for mitochondrial oxidative phosphorylation of ADP to ATP. Transports copper ions probably in the form of anionic copper(I) complexes to maintain mitochondrial matrix copper pool and to supply copper for cytochrome C oxidase complex assembly. May also play a role in regulation of the mitochondrial permeability transition pore (mPTP). The sequence is that of Solute carrier family 25 member 3 from Mus musculus (Mouse).